A 271-amino-acid chain; its full sequence is Formamidopyrimidine-DNA glycosylase (271 aa).

The active-site Schiff-base intermediate with DNA is the P2. E3 (proton donor) is an active-site residue. K57 serves as the catalytic Proton donor; for beta-elimination activity. The DNA site is built by H90, R109, and K151. The segment at 236–270 (HVYSRGGETCTSCGNLLSEIRLGQRTTVFCGICQT) adopts an FPG-type zinc-finger fold. R260 (proton donor; for delta-elimination activity) is an active-site residue.

This sequence belongs to the FPG family. In terms of assembly, monomer. Requires Zn(2+) as cofactor.

It carries out the reaction Hydrolysis of DNA containing ring-opened 7-methylguanine residues, releasing 2,6-diamino-4-hydroxy-5-(N-methyl)formamidopyrimidine.. The enzyme catalyses 2'-deoxyribonucleotide-(2'-deoxyribose 5'-phosphate)-2'-deoxyribonucleotide-DNA = a 3'-end 2'-deoxyribonucleotide-(2,3-dehydro-2,3-deoxyribose 5'-phosphate)-DNA + a 5'-end 5'-phospho-2'-deoxyribonucleoside-DNA + H(+). Functionally, involved in base excision repair of DNA damaged by oxidation or by mutagenic agents. Acts as a DNA glycosylase that recognizes and removes damaged bases. Has a preference for oxidized purines, such as 7,8-dihydro-8-oxoguanine (8-oxoG). Has AP (apurinic/apyrimidinic) lyase activity and introduces nicks in the DNA strand. Cleaves the DNA backbone by beta-delta elimination to generate a single-strand break at the site of the removed base with both 3'- and 5'-phosphates. The chain is Formamidopyrimidine-DNA glycosylase from Shewanella baltica (strain OS195).